Consider the following 341-residue polypeptide: MFKQSYQLCLVFLLFVCFYQSVKGNYGKRSKYQKHKGTIPYYSNRYHHARRQTALSRTGKSDSSPFQIILRAINRRPGPQINGRGKKSVTRTLGMLQSVLSQRRGLYNHRSQKSQNVFGVLQNLLKNVRMFKRNIGRLYVSDIVRRRIPTVNAQATARVNVQATAGVNSLTTAVNTDSQTRTLNTLRATGWFKEVSENRLIMQQVLRASLNGVIAGWIETLARRDLMEEFIDYPQAFAIITNTVLSSSQKQLILDLGGNDQLQELLENVPAFTLILNYVQTQDRVQMIVTISETGNMDKLISNLGVLNRFLSNAITPGQTAAIRNLAENGQLEQFIDNQRG.

An N-terminal signal peptide occupies residues 1–24 (MFKQSYQLCLVFLLFVCFYQSVKG).

As to expression, component of the organic matrix of calcified shell layers like nacre and prisms.

Its subcellular location is the secreted. The chain is Mytilin-2 from Mytilus californianus (California mussel).